The following is a 153-amino-acid chain: Cytochrome c oxidase subunit 5A, mitochondrial (153 aa).

Residues 1–20 (MLRNTFTRAGGLSRITSVRF) constitute a mitochondrion transit peptide. Residues 21–88 (AQTHALSNAA…EWGPRRPVLN (68 aa)) are Mitochondrial matrix-facing. The helical transmembrane segment at 89-111 (KGDSSFIAKGVAAGLLFSVGLFA) threads the bilayer. The Mitochondrial intermembrane portion of the chain corresponds to 112–153 (VVRMAGGQDAKTMNKEWQLKSDEYLKSKNANPWGGYSQVQSK).

The protein belongs to the cytochrome c oxidase IV family. Component of the cytochrome c oxidase (complex IV, CIV), a multisubunit enzyme composed of 12 subunits. The complex is composed of a catalytic core of 3 subunits COX1, COX2 and COX3, encoded in the mitochondrial DNA, and 9 supernumerary subunits COX4, COX5A (or COX5B), COX6, COX7, COX8, COX9, COX12, COX13 and COX26, which are encoded in the nuclear genome. COX5A is the predominant subunit V during aerobic/normoxic growth, it gets replaced by COX5B under anaerobic/hypoxic conditions. The complex exists as a monomer or a dimer and forms supercomplexes (SCs) in the inner mitochondrial membrane with a dimer of ubiquinol-cytochrome c oxidoreductase (cytochrome b-c1 complex, complex III, CIII), resulting in 2 different assemblies (supercomplexes III(2)IV and III(2)IV(2)). COX5A interacts with COR1, CYT1 and QCR6 at the CIII-CIV interface.

It localises to the mitochondrion inner membrane. It participates in energy metabolism; oxidative phosphorylation. In terms of biological role, component of the cytochrome c oxidase, the last enzyme in the mitochondrial electron transport chain which drives oxidative phosphorylation. The respiratory chain contains 3 multisubunit complexes succinate dehydrogenase (complex II, CII), ubiquinol-cytochrome c oxidoreductase (cytochrome b-c1 complex, complex III, CIII) and cytochrome c oxidase (complex IV, CIV), that cooperate to transfer electrons derived from NADH and succinate to molecular oxygen, creating an electrochemical gradient over the inner membrane that drives transmembrane transport and the ATP synthase. Cytochrome c oxidase is the component of the respiratory chain that catalyzes the reduction of oxygen to water. Electrons originating from reduced cytochrome c in the intermembrane space (IMS) are transferred via the dinuclear copper A center (CU(A)) of COX2 and heme A of COX1 to the active site in COX1, a binuclear center (BNC) formed by heme A3 and copper B (CU(B)). The BNC reduces molecular oxygen to 2 water molecules using 4 electrons from cytochrome c in the IMS and 4 protons from the mitochondrial matrix. This Saccharomyces cerevisiae (strain ATCC 204508 / S288c) (Baker's yeast) protein is Cytochrome c oxidase subunit 5A, mitochondrial (COX5A).